The following is a 117-amino-acid chain: Hydrogenase maturation factor HypA (117 aa).

His-2 is a Ni(2+) binding site. 4 residues coordinate Zn(2+): Cys-73, Cys-76, Cys-89, and Cys-92.

Belongs to the HypA/HybF family.

Involved in the maturation of [NiFe] hydrogenases. Required for nickel insertion into the metal center of the hydrogenase. This chain is Hydrogenase maturation factor HypA, found in Shewanella baltica (strain OS195).